We begin with the raw amino-acid sequence, 124 residues long: Cytochrome b5-like protein (124 aa).

The chain crosses the membrane as a helical span at residues 5-22 (YLLILIIIYVIKIICRYF). In terms of domain architecture, Cytochrome b5 heme-binding spans 49 to 124 (NQINQVNQVN…ILSKYKITEK (76 aa)). His84 and His108 together coordinate heme.

Belongs to the cytochrome b5 family.

The protein resides in the membrane. Its function is as follows. Membrane bound hemoprotein which function as an electron carrier for several membrane bound oxygenases. This is Cytochrome b5-like protein from Acanthamoeba polyphaga (Amoeba).